The sequence spans 88 residues: Carboxysome shell vertex protein CsoS4A (88 aa).

Residues 1-76 form the BMV domain; that stretch reads MLICKVLKPL…SDLTIVGIID (76 aa).

Belongs to the CcmL/EutN family. CsoS4 subfamily. Homopentamer.

It localises to the carboxysome. Its function is as follows. Probably forms vertices in the carboxysome, a polyhedral inclusion where RuBisCO (ribulose bisphosphate carboxylase, cbbL-cbbS) is sequestered. Has been modeled to induce curvature upon insertion into an otherwise flat hexagonal layer of major carboxysome subunits. Has not been identified in purified carboxysomes; it is expected to be present in very low amounts. This is Carboxysome shell vertex protein CsoS4A from Prochlorococcus marinus subsp. pastoris (strain CCMP1986 / NIES-2087 / MED4).